A 424-amino-acid chain; its full sequence is MAKALNGVRILDFTHVQSGPTCTQLLAWFGADVIKVERPGTGDITRGQLQDVPNADSLYFTMLNHNKRSITLDAKNPKGKEVLTALIKSCDVMVENFAPGVLDRMGFSWENIQKINPKLIVASIKGFGPGPFEDCKVYENVAQCTGGSASTTGFRDGLPLVTGAQIGDSGTGLHLALGIVTALFHRTHSGKGQRVTVAMQDSVLNLCRVKMRDQQRLAHGPLKEYSQFGEGIPFGDATPRAGNDSGGGQPGRILKCKGWETDPNAYIYFITQAAVWEKICDVIGEPTWKTDPNYAKPGARLPRLNEIFGRIEQWTMTKTKFEVMNICNPFDIPCGPILSMKEIAEDKSLYATGTLVEVDHPTRGKYISVGNPIKLSDSPADVRRSPLLGEHTDEILRDVLKFSESQVSDIRSSGALGEVPLAAE.

Residues 17–18 (QS), arginine 38, 96–98 (NFA), arginine 104, and 136–139 (KVYE) contribute to the CoA site. Aspartate 168 (nucleophile) is an active-site residue. 247-249 (GGQ) contacts substrate.

This sequence belongs to the CoA-transferase III family. Frc subfamily. In terms of assembly, homodimer.

The catalysed reaction is formyl-CoA + oxalate = oxalyl-CoA + formate. It functions in the pathway metabolic intermediate degradation; oxalate degradation; CO(2) and formate from oxalate: step 1/2. Involved in the catabolism of oxalate and in the adapatation to low pH via the induction of the oxalate-dependent acid tolerance response (ATR). Catalyzes the transfer of the CoA moiety from formyl-CoA to oxalate. The chain is Formyl-CoA:oxalate CoA-transferase from Afipia carboxidovorans (strain ATCC 49405 / DSM 1227 / KCTC 32145 / OM5) (Oligotropha carboxidovorans).